A 1270-amino-acid polypeptide reads, in one-letter code: DNA-directed RNA polymerase subunit beta (1270 aa).

The protein belongs to the RNA polymerase beta chain family. The RNAP catalytic core consists of 2 alpha, 1 beta, 1 beta' and 1 omega subunit. When a sigma factor is associated with the core the holoenzyme is formed, which can initiate transcription.

It carries out the reaction RNA(n) + a ribonucleoside 5'-triphosphate = RNA(n+1) + diphosphate. DNA-dependent RNA polymerase catalyzes the transcription of DNA into RNA using the four ribonucleoside triphosphates as substrates. This Flavobacterium johnsoniae (strain ATCC 17061 / DSM 2064 / JCM 8514 / BCRC 14874 / CCUG 350202 / NBRC 14942 / NCIMB 11054 / UW101) (Cytophaga johnsonae) protein is DNA-directed RNA polymerase subunit beta.